Here is a 445-residue protein sequence, read N- to C-terminus: Phosphoglucosamine mutase (445 aa).

The active-site Phosphoserine intermediate is Ser102. Mg(2+) contacts are provided by Ser102, Asp241, Asp243, and Asp245. At Ser102 the chain carries Phosphoserine.

The protein belongs to the phosphohexose mutase family. It depends on Mg(2+) as a cofactor. Post-translationally, activated by phosphorylation.

It catalyses the reaction alpha-D-glucosamine 1-phosphate = D-glucosamine 6-phosphate. Functionally, catalyzes the conversion of glucosamine-6-phosphate to glucosamine-1-phosphate. This Shewanella halifaxensis (strain HAW-EB4) protein is Phosphoglucosamine mutase.